The chain runs to 93 residues: uncharacterized protein (93 aa).

Residues 24 to 85 enclose the TRAM domain; the sequence is QLQVGDTLKL…IQTQVGRLFF (62 aa).

This sequence belongs to the ycf81 family.

This is an uncharacterized protein from Thermus thermophilus.